A 120-amino-acid chain; its full sequence is MAVDTTTEAKAIARYIRMSPFKVRRVLDQIRGRSYREALIILEFMPYRACEPILKLLRSAVANAEHNQGLDPTTLVVSQAYADGGPSLRRYRPRAQGRAYQIRKPTCHITIAVAPQVEDN.

It belongs to the universal ribosomal protein uL22 family. Part of the 50S ribosomal subunit.

This protein binds specifically to 23S rRNA; its binding is stimulated by other ribosomal proteins, e.g. L4, L17, and L20. It is important during the early stages of 50S assembly. It makes multiple contacts with different domains of the 23S rRNA in the assembled 50S subunit and ribosome. Its function is as follows. The globular domain of the protein is located near the polypeptide exit tunnel on the outside of the subunit, while an extended beta-hairpin is found that lines the wall of the exit tunnel in the center of the 70S ribosome. This chain is Large ribosomal subunit protein uL22, found in Crocosphaera subtropica (strain ATCC 51142 / BH68) (Cyanothece sp. (strain ATCC 51142)).